Consider the following 414-residue polypeptide: Esterase FrsA (414 aa).

The protein belongs to the FrsA family.

It catalyses the reaction a carboxylic ester + H2O = an alcohol + a carboxylate + H(+). In terms of biological role, catalyzes the hydrolysis of esters. The protein is Esterase FrsA of Salmonella choleraesuis (strain SC-B67).